The sequence spans 58 residues: Large ribosomal subunit protein bL32c (58 aa).

The interval 1-23 (MAVPKKRTSKAKKNARKSVWKKK) is disordered.

This sequence belongs to the bacterial ribosomal protein bL32 family.

It is found in the plastid. The protein localises to the chloroplast. The protein is Large ribosomal subunit protein bL32c (rpl32-A) of Trieres chinensis (Marine centric diatom).